A 363-amino-acid chain; its full sequence is tRNA dimethylallyltransferase (363 aa).

The unknown insert stretch occupies residues 1–55; that stretch reads MLACNDDTSLYLLVKQVTKKEIYSNDLENGNVKRGASMQSLYLIGDPKCCRNNSS. Residue 65-72 participates in ATP binding; it reads GPTASGKS. 67-72 contacts substrate; it reads TASGKS. Interaction with substrate tRNA stretches follow at residues 90–93 and 214–218; these read DSMQ and QRLIR.

The protein belongs to the IPP transferase family. In terms of assembly, monomer. Mg(2+) is required as a cofactor.

The enzyme catalyses adenosine(37) in tRNA + dimethylallyl diphosphate = N(6)-dimethylallyladenosine(37) in tRNA + diphosphate. In terms of biological role, catalyzes the transfer of a dimethylallyl group onto the adenine at position 37 in tRNAs that read codons beginning with uridine, leading to the formation of N6-(dimethylallyl)adenosine (i(6)A). In Rickettsia conorii (strain ATCC VR-613 / Malish 7), this protein is tRNA dimethylallyltransferase.